The primary structure comprises 182 residues: Large ribosomal subunit protein uL5 (182 aa).

The protein belongs to the universal ribosomal protein uL5 family. In terms of assembly, part of the 50S ribosomal subunit; part of the 5S rRNA/L5/L18/L25 subcomplex. Contacts the 5S rRNA and the P site tRNA. Forms a bridge to the 30S subunit in the 70S ribosome.

Its function is as follows. This is one of the proteins that bind and probably mediate the attachment of the 5S RNA into the large ribosomal subunit, where it forms part of the central protuberance. In the 70S ribosome it contacts protein S13 of the 30S subunit (bridge B1b), connecting the 2 subunits; this bridge is implicated in subunit movement. Contacts the P site tRNA; the 5S rRNA and some of its associated proteins might help stabilize positioning of ribosome-bound tRNAs. The chain is Large ribosomal subunit protein uL5 from Thermosipho melanesiensis (strain DSM 12029 / CIP 104789 / BI429).